A 226-amino-acid polypeptide reads, in one-letter code: uncharacterized protein (226 aa).

Residues 1 to 112 form the Response regulatory domain; it reads MLVEDDHSIS…ELTARVKAAI (112 aa). Asp48 is modified (4-aspartylphosphate). A DNA-binding region (ompR/PhoB-type) is located at residues 126 to 225; that stretch reads NKVIRIHQLA…LWGIGYKLGE (100 aa).

Phosphorylated by YcbM.

It is found in the cytoplasm. Functionally, member of the two-component regulatory system YcbM/YcbL. This is an uncharacterized protein from Bacillus subtilis (strain 168).